Reading from the N-terminus, the 235-residue chain is Myc target protein 1 (235 aa).

The Bipartite nuclear localization signal motif lies at 95-113; the sequence is RRRRASAPISQWSSSRRSR. Serine 135, serine 138, serine 141, and serine 149 each carry phosphoserine.

Belongs to the MYCT1 family. In terms of tissue distribution, down-regulated in gastric cancer tissues.

Its subcellular location is the nucleus. May regulate certain MYC target genes, MYC seems to be a direct upstream transcriptional activator. Does not seem to significantly affect growth cell capacity. Overexpression seems to mediate many of the known phenotypic features associated with MYC, including promotion of apoptosis, alteration of morphology, enhancement of anchorage-independent growth, tumorigenic conversion, promotion of genomic instability, and inhibition of hematopoietic differentiation. This is Myc target protein 1 (MYCT1) from Homo sapiens (Human).